The chain runs to 142 residues: Hemoglobin subunit alpha-1 (142 aa).

The Globin domain maps to 2–142; the sequence is VLSADDKSNV…VSTVLTSKYR (141 aa). Histidine 59 provides a ligand contact to O2. Histidine 88 contributes to the heme b binding site.

The protein belongs to the globin family. As to quaternary structure, heterotetramer of two alpha chains and two beta chains. Red blood cells.

Functionally, involved in oxygen transport from the lung to the various peripheral tissues. In terms of biological role, hemopressin acts as an antagonist peptide of the cannabinoid receptor CNR1. Hemopressin-binding efficiently blocks cannabinoid receptor CNR1 and subsequent signaling. This is Hemoglobin subunit alpha-1 (HBA1) from Equus quagga burchellii (Burchell's zebra).